Consider the following 117-residue polypeptide: Large ribosomal subunit protein bL20 (117 aa).

It belongs to the bacterial ribosomal protein bL20 family.

Its function is as follows. Binds directly to 23S ribosomal RNA and is necessary for the in vitro assembly process of the 50S ribosomal subunit. It is not involved in the protein synthesizing functions of that subunit. The chain is Large ribosomal subunit protein bL20 from Idiomarina loihiensis (strain ATCC BAA-735 / DSM 15497 / L2-TR).